Reading from the N-terminus, the 347-residue chain is 4-hydroxy-tetrahydrodipicolinate reductase 1, chloroplastic (347 aa).

Residues 1–51 (MATNGLMASSSVFLHRPRIAFASRTNQTVGKYGKGRVSFMGIGTRRLPVVL) constitute a chloroplast transit peptide. The residue at position 52 (S52) is an N-acetylserine. NAD(+) contacts are provided by residues 79 to 84 (GCSGKM), 171 to 173 (GTT), and 194 to 197 (SPQM). Catalysis depends on H230, which acts as the Proton donor/acceptor. The active-site Proton donor is the K234. (S)-2,3,4,5-tetrahydrodipicolinate is bound at residue 239–240 (GT).

It belongs to the DapB family.

Its subcellular location is the plastid. It is found in the chloroplast. It carries out the reaction (S)-2,3,4,5-tetrahydrodipicolinate + NAD(+) + H2O = (2S,4S)-4-hydroxy-2,3,4,5-tetrahydrodipicolinate + NADH + H(+). The catalysed reaction is (S)-2,3,4,5-tetrahydrodipicolinate + NADP(+) + H2O = (2S,4S)-4-hydroxy-2,3,4,5-tetrahydrodipicolinate + NADPH + H(+). It participates in amino-acid biosynthesis; L-lysine biosynthesis via DAP pathway; (S)-tetrahydrodipicolinate from L-aspartate: step 4/4. Functionally, catalyzes the conversion of 4-hydroxy-tetrahydrodipicolinate (HTPA) to tetrahydrodipicolinate. The sequence is that of 4-hydroxy-tetrahydrodipicolinate reductase 1, chloroplastic (DAPB1) from Arabidopsis thaliana (Mouse-ear cress).